The chain runs to 151 residues: Large ribosomal subunit protein bL28c (151 aa).

The N-terminal 74 residues, 1-74 (MATMVAGISL…PFKPSLQPVA (74 aa)), are a transit peptide targeting the chloroplast.

The protein belongs to the bacterial ribosomal protein bL28 family. In terms of assembly, part of the 50S ribosomal subunit.

It is found in the plastid. The protein localises to the chloroplast. The protein is Large ribosomal subunit protein bL28c (RPL28) of Nicotiana tabacum (Common tobacco).